Consider the following 168-residue polypeptide: ATP synthase F(1) complex subunit delta, mitochondrial (168 aa).

A mitochondrion-targeting transit peptide spans 1 to 22 (MLPAALLRHPGLRRLVLQARTY). 2 positions are modified to N6-acetyllysine; alternate: Lys136 and Lys165. N6-succinyllysine; alternate occurs at positions 136 and 165.

This sequence belongs to the ATPase epsilon chain family. Component of the ATP synthase complex composed at least of ATP5F1A/subunit alpha, ATP5F1B/subunit beta, ATP5MC1/subunit c (homooctomer), MT-ATP6/subunit a, MT-ATP8/subunit 8, ATP5ME/subunit e, ATP5MF/subunit f, ATP5MG/subunit g, ATP5MK/subunit k, ATP5MJ/subunit j, ATP5F1C/subunit gamma, ATP5F1D/subunit delta, ATP5F1E/subunit epsilon, ATP5PF/subunit F6, ATP5PB/subunit b, ATP5PD/subunit d, ATP5PO/subunit OSCP. ATP synthase complex consists of a soluble F(1) head domain (subunits alpha(3) and beta(3)) - the catalytic core - and a membrane F(0) domain - the membrane proton channel (subunits c, a, 8, e, f, g, k and j). These two domains are linked by a central stalk (subunits gamma, delta, and epsilon) rotating inside the F1 region and a stationary peripheral stalk (subunits F6, b, d, and OSCP). Component of a complex composed at least by ATPIF1, ATP5F1A, ATP5F1B, ATP5F1C AND ATP5F1E.

It localises to the mitochondrion. Its subcellular location is the mitochondrion inner membrane. Subunit delta, of the mitochondrial membrane ATP synthase complex (F(1)F(0) ATP synthase or Complex V) that produces ATP from ADP in the presence of a proton gradient across the membrane which is generated by electron transport complexes of the respiratory chain. ATP synthase complex consist of a soluble F(1) head domain - the catalytic core - and a membrane F(1) domain - the membrane proton channel. These two domains are linked by a central stalk rotating inside the F(1) region and a stationary peripheral stalk. During catalysis, ATP synthesis in the catalytic domain of F(1) is coupled via a rotary mechanism of the central stalk subunits to proton translocation. In vivo, can only synthesize ATP although its ATP hydrolase activity can be activated artificially in vitro. With the central stalk subunit gamma, is essential for the biogenesis of F(1) catalytic part of the ATP synthase complex namely in the formation of F1 assembly intermediate. This is ATP synthase F(1) complex subunit delta, mitochondrial from Rattus norvegicus (Rat).